A 152-amino-acid chain; its full sequence is Ubiquitin-conjugating enzyme E2 A (152 aa).

Residues 4 to 150 enclose the UBC core domain; sequence PARRRLMRDF…VSAIVEQSWR (147 aa). Cysteine 88 (glycyl thioester intermediate) is an active-site residue. Serine 120 carries the post-translational modification Phosphoserine; by CDK9.

It belongs to the ubiquitin-conjugating enzyme family. In terms of assembly, interacts with RAD18 and WAC. Interacts with RFPL4A and CCNB1. Post-translationally, phosphorylation at Ser-120 by CDK9 increases activity towards histone H2B.

Its subcellular location is the late endosome. The protein resides in the lysosome. It carries out the reaction S-ubiquitinyl-[E1 ubiquitin-activating enzyme]-L-cysteine + [E2 ubiquitin-conjugating enzyme]-L-cysteine = [E1 ubiquitin-activating enzyme]-L-cysteine + S-ubiquitinyl-[E2 ubiquitin-conjugating enzyme]-L-cysteine.. Its pathway is protein modification; protein ubiquitination. Its function is as follows. E2 ubiquitin-conjugating enzyme that accepts ubiquitin from the ubiquitin-activating enzyme E1 and transfers it to a E3 ubiquitin-protein ligase. In vitro catalyzes 'Lys-11', as well as 'Lys-48'-linked polyubiquitination. Together with the E3 enzyme BRE1 (RNF20 and/or RNF40), plays a role in transcription regulation by catalyzing the monoubiquitination of histone H2B at 'Lys-120' to form H2BK120ub1. H2BK120ub1 gives a specific tag for epigenetic transcriptional activation, elongation by RNA polymerase II, telomeric silencing, and is also a prerequisite for H3K4me and H3K79me formation. Involved in mitophagy by acting as a E2 ubiquitin-conjugating enzyme for PRKN. In association with the E3 enzyme UBR4, is involved in N-end rule-dependent protein degradation. In association with the E3 ubiquitin-protein ligase complex SIFI, inhibits the mitochondrial stress response by acting as a E2 ubiquitin-conjugating enzyme for UBR4 and KCMF1. The polypeptide is Ubiquitin-conjugating enzyme E2 A (Homo sapiens (Human)).